The following is a 422-amino-acid chain: Phosphoribosylamine--glycine ligase (422 aa).

Residues 107 to 312 (KEVMAAAGVR…LGQLLYAAGT (206 aa)) enclose the ATP-grasp domain. 138 to 193 (PPVGDLSWVVKDDRLAAGKGVVVTSDRDVARTHAAGLLEAGHPVLLESYLDGPEVS) provides a ligand contact to ATP. Mg(2+) contacts are provided by Glu282 and Asn284.

It belongs to the GARS family. Mg(2+) is required as a cofactor. The cofactor is Mn(2+).

The catalysed reaction is 5-phospho-beta-D-ribosylamine + glycine + ATP = N(1)-(5-phospho-beta-D-ribosyl)glycinamide + ADP + phosphate + H(+). The protein operates within purine metabolism; IMP biosynthesis via de novo pathway; N(1)-(5-phospho-D-ribosyl)glycinamide from 5-phospho-alpha-D-ribose 1-diphosphate: step 2/2. This Mycobacterium leprae (strain TN) protein is Phosphoribosylamine--glycine ligase.